A 553-amino-acid chain; its full sequence is Glycerol kinase 2 (553 aa).

Thr20 provides a ligand contact to substrate. Residue Arg24 coordinates ATP. Positions 94, 148, and 259 each coordinate substrate. ATP contacts are provided by residues Thr281, Gly326, and 427–431 (GMTNN). Residues 526 to 546 (IFSSLPLGFFIVSSMVMLIGA) form a helical membrane-spanning segment.

The protein belongs to the FGGY kinase family. Interacts with ARMC12. Interacts with PLD6. In terms of tissue distribution, testis-specific. Expressed in the midpiece of spermatozoa.

The protein resides in the mitochondrion outer membrane. The protein localises to the cytoplasm. It catalyses the reaction glycerol + ATP = sn-glycerol 3-phosphate + ADP + H(+). Its pathway is polyol metabolism; glycerol degradation via glycerol kinase pathway; sn-glycerol 3-phosphate from glycerol: step 1/1. In terms of biological role, key enzyme in the regulation of glycerol uptake and metabolism. Essential for male fertility and sperm mitochondrial sheath formation. Required for proper arrangement of crescent-like mitochondria to form the mitochondrial sheath during spermatogenesis. Can induce mitochondrial clustering through interactions with PLD6 and up-regulation of phosphatidic acid synthesis in the mitochondria. The polypeptide is Glycerol kinase 2 (GK2) (Homo sapiens (Human)).